Here is a 48-residue protein sequence, read N- to C-terminus: Ribulose bisphosphate carboxylase large chain (48 aa).

This sequence belongs to the RuBisCO large chain family. Type I subfamily. As to quaternary structure, heterohexadecamer of 8 large chains and 8 small chains.

The protein localises to the plastid. Its subcellular location is the chloroplast. The catalysed reaction is 2 (2R)-3-phosphoglycerate + 2 H(+) = D-ribulose 1,5-bisphosphate + CO2 + H2O. The enzyme catalyses D-ribulose 1,5-bisphosphate + O2 = 2-phosphoglycolate + (2R)-3-phosphoglycerate + 2 H(+). RuBisCO catalyzes two reactions: the carboxylation of D-ribulose 1,5-bisphosphate, the primary event in carbon dioxide fixation, as well as the oxidative fragmentation of the pentose substrate in the photorespiration process. Both reactions occur simultaneously and in competition at the same active site. The protein is Ribulose bisphosphate carboxylase large chain (rbcL) of Pinus pinaster (Maritime pine).